A 487-amino-acid chain; its full sequence is UL37 immediate early glycoprotein (487 aa).

An N-terminal signal peptide occupies residues 1-22 (MSPVYVNLLGSVGLLAFWYFSY). Acidic residues predominate over residues 83–107 (GEESVTEDTEREDTEEEREDEEEEN). Residues 83 to 121 (GEESVTEDTEREDTEEEREDEEEENEARTPEVNPIDAEG) form a disordered region. N-linked (GlcNAc...) asparagine; by host glycans are attached at residues N206, N210, N219, N223, N242, N246, N275, N281, N294, N297, N306, N333, N337, N343, N379, N384, and N391. The chain crosses the membrane as a helical span at residues 433–459 (WALLSICTVAAGSIALLSLFCILLIGL).

The protein belongs to the immediate early glycoprotein family. Interacts with host BAX. Interacts with host RSAD2/viperin; this interaction results in RSAD2/viperin relocalization from the endoplasmic reticulum to the mitochondria, actin cytoskeleton disruption and enhancement of infection. Interacts with host PEX19; this interaction inhibits the peroxisomal-dependent antiviral signaling. Interacts with host CHCHD6; this interaction rewires mitochondria by engaging the conserved MICOS complex.

Its subcellular location is the host endoplasmic reticulum membrane. It localises to the host Golgi apparatus membrane. The protein resides in the host mitochondrion membrane. The protein localises to the host peroxisome. Functionally, multifunctional transmembrane protein that plays several key roles in viral replication. Rapidely traffics from the host endoplasmic reticulum to the outer mitochondrial membrane where it acts to inhibit host immune response, block apoptotic signaling, regulate calcium flux, and induce mitochondrial fragmentation. Sequesters proapoptotic BAX at the outer mitochondrial membrane and prevents cytochrome c release and subsequent initiation of the proapoptotic cascade. Also provoques a calcium efflux from host endoplasmic reticulum and F-actin cytoskeleton disruption. Participates in the increase of host mitochondrial biogenesis, thus promoting viral replication by efficient use of newly made mitochondria. Additionally, a subset of vMIA localizes to peroxisomes, causing fragmentation and blocking peroxisomal MAVS signaling. Mechanistically, inhibits host MAVS oligomerization at peroxisomes in a mitochondrial fission factors (MFF)-dependent manner and in mitochondria independently of mitochondrial fission factors. Plays an essential role in the trafficking of host viperin/RSAD2 from the endoplasmic reticulum to the viral assembly compartment via the mitochondria during viral infection as failure of viperin to localize to the mitochondria results in insufficient lipogenesis and thus reduces viral replication. Its function is as follows. May play a role in escape from the host antiviral response. This Human cytomegalovirus (strain AD169) (HHV-5) protein is UL37 immediate early glycoprotein (UL37).